The primary structure comprises 152 residues: MFDLGWSELLVIGVVALIVVGPKDLPVLFRNVGRWVGKARGLAREFSRAMNDAADEAGVKDISKGLKAATNPVDAALDGVRKAATDFKTDLDPTKYNPDSETGKLAAERAEQAKKIQAATARVAAERRLREATAELEKAKDAEAALKPGPET.

Residues 1–21 (MFDLGWSELLVIGVVALIVVG) form a helical membrane-spanning segment.

This sequence belongs to the TatB family. The Tat system comprises two distinct complexes: a TatABC complex, containing multiple copies of TatA, TatB and TatC subunits, and a separate TatA complex, containing only TatA subunits. Substrates initially bind to the TatABC complex, which probably triggers association of the separate TatA complex to form the active translocon.

It is found in the cell inner membrane. Its function is as follows. Part of the twin-arginine translocation (Tat) system that transports large folded proteins containing a characteristic twin-arginine motif in their signal peptide across membranes. Together with TatC, TatB is part of a receptor directly interacting with Tat signal peptides. TatB may form an oligomeric binding site that transiently accommodates folded Tat precursor proteins before their translocation. This Ruegeria pomeroyi (strain ATCC 700808 / DSM 15171 / DSS-3) (Silicibacter pomeroyi) protein is Sec-independent protein translocase protein TatB.